Here is a 236-residue protein sequence, read N- to C-terminus: MATPHINAVEGAFAETVLFPGDPLRAKYIAETFLENVEQVTDVRNMLGFTGTYKGKRISVMGSGMGIPSCSIYATELIKDYGVKNLIRVGTCGAISTDVKVRDVIIGMGACTDSQVNRLRFKGQDFAAIADYSLLSAVVESAKTHGIQTRVGNVFSADLFYTPDPEMFDVMEKMGVLGVEMEAAGLYGVAHEFGARALCVVTVSDHIRTGEKTTSDERQTTFNDMIIMTLDAAINL.

Histidine 5 is a binding site for a purine D-ribonucleoside. Residues glycine 21, arginine 25, arginine 44, and 88-91 contribute to the phosphate site; that span reads RVGT. Residues 180–182 and 204–205 contribute to the a purine D-ribonucleoside site; these read EME and SD. Aspartate 205 functions as the Proton donor in the catalytic mechanism.

Belongs to the PNP/UDP phosphorylase family. In terms of assembly, homohexamer; trimer of homodimers.

The enzyme catalyses a purine D-ribonucleoside + phosphate = a purine nucleobase + alpha-D-ribose 1-phosphate. The catalysed reaction is a purine 2'-deoxy-D-ribonucleoside + phosphate = a purine nucleobase + 2-deoxy-alpha-D-ribose 1-phosphate. Its function is as follows. Catalyzes the reversible phosphorolytic breakdown of the N-glycosidic bond in the beta-(deoxy)ribonucleoside molecules, with the formation of the corresponding free purine bases and pentose-1-phosphate. This Shewanella amazonensis (strain ATCC BAA-1098 / SB2B) protein is Purine nucleoside phosphorylase DeoD-type.